Consider the following 295-residue polypeptide: ATP synthase gamma chain (295 aa).

This sequence belongs to the ATPase gamma chain family. F-type ATPases have 2 components, CF(1) - the catalytic core - and CF(0) - the membrane proton channel. CF(1) has five subunits: alpha(3), beta(3), gamma(1), delta(1), epsilon(1). CF(0) has three main subunits: a, b and c.

The protein localises to the cell inner membrane. In terms of biological role, produces ATP from ADP in the presence of a proton gradient across the membrane. The gamma chain is believed to be important in regulating ATPase activity and the flow of protons through the CF(0) complex. The sequence is that of ATP synthase gamma chain from Methylorubrum populi (strain ATCC BAA-705 / NCIMB 13946 / BJ001) (Methylobacterium populi).